The chain runs to 153 residues: Endoribonuclease YbeY (153 aa).

Positions 118, 122, and 128 each coordinate Zn(2+).

Belongs to the endoribonuclease YbeY family. The cofactor is Zn(2+).

Its subcellular location is the cytoplasm. In terms of biological role, single strand-specific metallo-endoribonuclease involved in late-stage 70S ribosome quality control and in maturation of the 3' terminus of the 16S rRNA. This Oenococcus oeni (strain ATCC BAA-331 / PSU-1) protein is Endoribonuclease YbeY.